The primary structure comprises 398 residues: Acetate kinase 1 (398 aa).

Asparagine 9 contributes to the Mg(2+) binding site. An ATP-binding site is contributed by lysine 16. Residue arginine 89 coordinates substrate. Aspartate 146 functions as the Proton donor/acceptor in the catalytic mechanism. ATP-binding positions include 206–210 (HLGNG), 281–283 (DCR), and 329–333 (GIGEN). A Mg(2+)-binding site is contributed by glutamate 384.

It belongs to the acetokinase family. In terms of assembly, homodimer. The cofactor is Mg(2+). Mn(2+) serves as cofactor.

It localises to the cytoplasm. The catalysed reaction is acetate + ATP = acetyl phosphate + ADP. Its pathway is metabolic intermediate biosynthesis; acetyl-CoA biosynthesis; acetyl-CoA from acetate: step 1/2. Catalyzes the formation of acetyl phosphate from acetate and ATP. Can also catalyze the reverse reaction. This Vibrio parahaemolyticus serotype O3:K6 (strain RIMD 2210633) protein is Acetate kinase 1.